The following is a 139-amino-acid chain: Hydrogenase maturation factor HypA (139 aa).

Residue histidine 2 coordinates Ni(2+). Zn(2+) is bound by residues cysteine 73, cysteine 76, cysteine 110, and cysteine 113.

Belongs to the HypA/HybF family.

Functionally, involved in the maturation of [NiFe] hydrogenases. Required for nickel insertion into the metal center of the hydrogenase. In Pyrococcus furiosus (strain ATCC 43587 / DSM 3638 / JCM 8422 / Vc1), this protein is Hydrogenase maturation factor HypA.